Reading from the N-terminus, the 347-residue chain is Sensor protein VraS (347 aa).

Helical transmembrane passes span 13–33 (ILVYSMLAAFLFIDKVFVNII) and 43–63 (IFGIPVFLFLNLIIILLCIIV). The Histidine kinase domain maps to 150 to 341 (RLARELHDSV…RIEVKAPLNK (192 aa)). His-156 is modified (phosphohistidine).

Post-translationally, autophosphorylated on His-156.

It is found in the cell membrane. The catalysed reaction is ATP + protein L-histidine = ADP + protein N-phospho-L-histidine.. Its function is as follows. Member of the two-component regulatory system PprA/PprB involved in biofilm formation by controlling the expression of many related genes including type IVb pili major subunit flp pilin, adhesin bapA or cupE fimbriae. Also modulates quorum-sensing signal production acting on both negative and positive modulators. Functions as a heme sensor histidine kinase which is autophosphorylated at a histidine residue and transfers its phosphate group to PprB. In Staphylococcus aureus (strain Mu3 / ATCC 700698), this protein is Sensor protein VraS (vraS).